A 258-amino-acid polypeptide reads, in one-letter code: Isoprenyl transferase (258 aa).

The active site involves Asp24. Residue Asp24 coordinates Mg(2+). Residues 25-28, Trp29, Arg37, His41, and 69-71 each bind substrate; these read GNGR and SSE. The active-site Proton acceptor is the Asn72. Residues Trp73, Arg75, Arg190, and 196 to 198 contribute to the substrate site; that span reads RIS. Residue Glu209 participates in Mg(2+) binding.

The protein belongs to the UPP synthase family. As to quaternary structure, homodimer. The cofactor is Mg(2+).

Catalyzes the condensation of isopentenyl diphosphate (IPP) with allylic pyrophosphates generating different type of terpenoids. This Ralstonia nicotianae (strain ATCC BAA-1114 / GMI1000) (Ralstonia solanacearum) protein is Isoprenyl transferase.